Reading from the N-terminus, the 742-residue chain is mRNA export factor ICP27 homolog (742 aa).

Residues 1–11 (MELHSRGRHDA) show a composition bias toward basic and acidic residues. The segment at 1–202 (MELHSRGRHD…NHHGSSAGPQ (202 aa)) is disordered. Residues 72-85 (SHHHRPCVPARRPR) show a composition bias toward basic residues. Residues 153 to 171 (KSYDNDDGEPHHHGGDSTH) show a composition bias toward basic and acidic residues. Positions 179–202 (CPTTFGSSHPSSANNHHGSSAGPQ) are enriched in polar residues. 4 residues coordinate Zn(2+): C387, H494, C496, and C501. The CHC2-type zinc finger occupies 387–501 (CILDHQDGWG…QCHECQNEMC (115 aa)). Residues 540-742 (ASNHATAGGQ…MLCYSDDMDD (203 aa)) form a disordered region. Residues 578–587 (YDKKDREGSH) are compositionally biased toward basic and acidic residues. Residues 614–626 (GELEEDEDSDDAS) show a composition bias toward acidic residues. Polar residues predominate over residues 692–703 (QSANGNHSTTAT).

The protein belongs to the HHV-1 ICP27 protein family. In terms of assembly, self-associates and forms high-molecular-mass complexes. Interacts with host DDX39A and DDX39B; these interactions are required for UL69 function in mRNA export. Interacts with host SUPT6H, EIF4A1 and PABPC1. Post-translationally, phosphorylated by UL97 and host CDK1, CDK7 and CD9. Phosphorylation by CDKs impacts on UL69 nuclear localization and activity.

The protein localises to the virion tegument. The protein resides in the virion. It localises to the host nucleus. It is found in the host cytoplasm. Immediate early (EI) protein that plays many roles during productive infection including regulation of host cell cycle progression, regulation of viral gene expression or nuclear export of intronless viral RNAs. Acts as a transcriptional transactivator via interaction with the cellular transcription elongation factor SUPT6H and as a nuclear RNA export factor via interaction with UAP56, a component of the cellular mRNA export machinery. The chain is mRNA export factor ICP27 homolog from Human cytomegalovirus (strain Merlin) (HHV-5).